The primary structure comprises 272 residues: Eukaryotic translation initiation factor 3 subunit G (272 aa).

2 disordered regions span residues 1-28 (MPAL…PTEI) and 157-188 (APTT…GRDD). In terms of domain architecture, RRM spans 190–268 (TAIRISNLSE…LILNVEWSKP (79 aa)).

This sequence belongs to the eIF-3 subunit G family. Component of the eukaryotic translation initiation factor 3 (eIF-3) complex.

The protein localises to the cytoplasm. Its function is as follows. RNA-binding component of the eukaryotic translation initiation factor 3 (eIF-3) complex, which is involved in protein synthesis of a specialized repertoire of mRNAs and, together with other initiation factors, stimulates binding of mRNA and methionyl-tRNAi to the 40S ribosome. The eIF-3 complex specifically targets and initiates translation of a subset of mRNAs involved in cell proliferation. This subunit can bind 18S rRNA. This chain is Eukaryotic translation initiation factor 3 subunit G, found in Aedes aegypti (Yellowfever mosquito).